We begin with the raw amino-acid sequence, 350 residues long: FAD:protein FMN transferase (350 aa).

Positions 1–19 (MDMTFFRAALLGACVLLSG) are cleaved as a signal peptide. Residue C20 is the site of N-palmitoyl cysteine attachment. The S-diacylglycerol cysteine moiety is linked to residue C20. Residues M41, W78, 119 to 121 (AMD), and D181 contribute to the FAD site. A Mg(2+)-binding site is contributed by T184. Positions 187 and 272 each coordinate FAD. Mg(2+) is bound by residues D298, D301, and T302.

It belongs to the ApbE family. It depends on Mg(2+) as a cofactor.

It localises to the cell inner membrane. It carries out the reaction L-threonyl-[protein] + FAD = FMN-L-threonyl-[protein] + AMP + H(+). Its function is as follows. Flavin transferase that catalyzes the transfer of the FMN moiety of FAD and its covalent binding to the hydroxyl group of a threonine residue in a target flavoprotein such as NqrB and NqrC, two subunits of the NQR complex. The sequence is that of FAD:protein FMN transferase from Klebsiella pneumoniae (strain 342).